We begin with the raw amino-acid sequence, 479 residues long: Glycogen synthase (479 aa).

Residue lysine 15 participates in ADP-alpha-D-glucose binding.

The protein belongs to the glycosyltransferase 1 family. Bacterial/plant glycogen synthase subfamily.

The catalysed reaction is [(1-&gt;4)-alpha-D-glucosyl](n) + ADP-alpha-D-glucose = [(1-&gt;4)-alpha-D-glucosyl](n+1) + ADP + H(+). Its pathway is glycan biosynthesis; glycogen biosynthesis. In terms of biological role, synthesizes alpha-1,4-glucan chains using ADP-glucose. This Clostridium beijerinckii (strain ATCC 51743 / NCIMB 8052) (Clostridium acetobutylicum) protein is Glycogen synthase.